The primary structure comprises 562 residues: Arf-GAP domain and FG repeat-containing protein 1 (562 aa).

The Arf-GAP domain maps to 11 to 135; the sequence is EKHLKMLRDM…WYVPPEQAKV (125 aa). The C4-type zinc finger occupies 29–52; it reads CFDCDQRGPTYVNMTVGSFVCTSC. S167 is modified (phosphoserine). The segment at 168-194 is disordered; it reads APALHLNKGTPSQSPVVGRSQAQQQEK. Polar residues predominate over residues 176–191; sequence GTPSQSPVVGRSQAQQ. T177 is modified (phosphothreonine). Phosphoserine occurs at positions 181 and 362. O-linked (GlcNAc) serine glycosylation is present at S367.

As to quaternary structure, interacts with EPS15R and EPS15. Interacts with FCHO1. Post-translationally, O-glycosylated.

The protein resides in the nucleus. Its subcellular location is the cytoplasmic vesicle. Required for vesicle docking or fusion during acrosome biogenesis. May play a role in RNA trafficking or localization. The polypeptide is Arf-GAP domain and FG repeat-containing protein 1 (AGFG1) (Bos taurus (Bovine)).